The following is a 137-amino-acid chain: Probable leaf thionin (137 aa).

The signal sequence occupies residues 1–28; the sequence is MATNKSIKSVVICVLILGLVLEQVQVEG. 4 disulfides stabilise this stretch: cysteine 31/cysteine 68, cysteine 32/cysteine 60, cysteine 40/cysteine 58, and cysteine 44/cysteine 54. Residues 75–137 constitute a propeptide, acidic domain; it reads LNLLPESGEP…DGDVIQSVEA (63 aa).

The protein belongs to the plant thionin (TC 1.C.44) family. 4 C-C subfamily.

Its subcellular location is the secreted. Functionally, thionins are small plant proteins which are toxic to animal cells. They seem to exert their toxic effect at the level of the cell membrane. Their precise function is not known. The sequence is that of Probable leaf thionin from Hordeum vulgare (Barley).